The sequence spans 511 residues: Limonoid UDP-glucosyltransferase (511 aa).

Residue H19 is the Proton acceptor of the active site. H19 serves as a coordination point for an anthocyanidin. Positions 344, 359, 362, 363, 364, and 367 each coordinate UDP-alpha-D-glucose. G382 lines the an anthocyanidin pocket. D383 and Q384 together coordinate UDP-alpha-D-glucose.

It belongs to the UDP-glycosyltransferase family.

It carries out the reaction limonin + UDP-alpha-D-glucose + H2O = limonin 17-beta-D-glucoside + UDP + 2 H(+). Functionally, involved in the glucosylation of limonoids. This is Limonoid UDP-glucosyltransferase from Citrus unshiu (Satsuma mandarin).